Reading from the N-terminus, the 194-residue chain is Imidazole glycerol phosphate synthase subunit HisH (194 aa).

The Glutamine amidotransferase type-1 domain maps to 3–194; it reads RIAIVDLGIG…LILLRNFRRL (192 aa). Cys74 (nucleophile) is an active-site residue. Active-site residues include His176 and Glu178.

Heterodimer of HisH and HisF.

The protein localises to the cytoplasm. The enzyme catalyses 5-[(5-phospho-1-deoxy-D-ribulos-1-ylimino)methylamino]-1-(5-phospho-beta-D-ribosyl)imidazole-4-carboxamide + L-glutamine = D-erythro-1-(imidazol-4-yl)glycerol 3-phosphate + 5-amino-1-(5-phospho-beta-D-ribosyl)imidazole-4-carboxamide + L-glutamate + H(+). It carries out the reaction L-glutamine + H2O = L-glutamate + NH4(+). The protein operates within amino-acid biosynthesis; L-histidine biosynthesis; L-histidine from 5-phospho-alpha-D-ribose 1-diphosphate: step 5/9. In terms of biological role, IGPS catalyzes the conversion of PRFAR and glutamine to IGP, AICAR and glutamate. The HisH subunit catalyzes the hydrolysis of glutamine to glutamate and ammonia as part of the synthesis of IGP and AICAR. The resulting ammonia molecule is channeled to the active site of HisF. This is Imidazole glycerol phosphate synthase subunit HisH from Pyrococcus furiosus (strain ATCC 43587 / DSM 3638 / JCM 8422 / Vc1).